A 313-amino-acid chain; its full sequence is tRNA dimethylallyltransferase (313 aa).

10–17 provides a ligand contact to ATP; it reads GPTASGKT. Residue 12–17 participates in substrate binding; sequence TASGKT. 3 interaction with substrate tRNA regions span residues 35 to 38, 159 to 163, and 240 to 245; these read DSAM, QRIQR, and RCVGYR.

Belongs to the IPP transferase family. In terms of assembly, monomer. It depends on Mg(2+) as a cofactor.

It catalyses the reaction adenosine(37) in tRNA + dimethylallyl diphosphate = N(6)-dimethylallyladenosine(37) in tRNA + diphosphate. Functionally, catalyzes the transfer of a dimethylallyl group onto the adenine at position 37 in tRNAs that read codons beginning with uridine, leading to the formation of N6-(dimethylallyl)adenosine (i(6)A). The chain is tRNA dimethylallyltransferase from Legionella pneumophila subsp. pneumophila (strain Philadelphia 1 / ATCC 33152 / DSM 7513).